Reading from the N-terminus, the 273-residue chain is Putative pyruvate, phosphate dikinase regulatory protein (273 aa).

149-156 provides a ligand contact to ADP; the sequence is GPSRTSKT.

It belongs to the pyruvate, phosphate/water dikinase regulatory protein family. PDRP subfamily.

The catalysed reaction is N(tele)-phospho-L-histidyl/L-threonyl-[pyruvate, phosphate dikinase] + ADP = N(tele)-phospho-L-histidyl/O-phospho-L-threonyl-[pyruvate, phosphate dikinase] + AMP + H(+). It catalyses the reaction N(tele)-phospho-L-histidyl/O-phospho-L-threonyl-[pyruvate, phosphate dikinase] + phosphate + H(+) = N(tele)-phospho-L-histidyl/L-threonyl-[pyruvate, phosphate dikinase] + diphosphate. Functionally, bifunctional serine/threonine kinase and phosphorylase involved in the regulation of the pyruvate, phosphate dikinase (PPDK) by catalyzing its phosphorylation/dephosphorylation. In Rickettsia felis (strain ATCC VR-1525 / URRWXCal2) (Rickettsia azadi), this protein is Putative pyruvate, phosphate dikinase regulatory protein.